Reading from the N-terminus, the 79-residue chain is RNA-binding protein Hfq (79 aa).

The 61-residue stretch at 10–70 (DVFLKTVRKQ…ISTIMPGQPI (61 aa)) folds into the Sm domain.

This sequence belongs to the Hfq family. As to quaternary structure, homohexamer.

RNA chaperone that binds small regulatory RNA (sRNAs) and mRNAs to facilitate mRNA translational regulation in response to envelope stress, environmental stress and changes in metabolite concentrations. Also binds with high specificity to tRNAs. The polypeptide is RNA-binding protein Hfq (Bartonella bacilliformis (strain ATCC 35685 / KC583 / Herrer 020/F12,63)).